A 502-amino-acid chain; its full sequence is Glycerol kinase (502 aa).

Residue Thr-14 participates in ADP binding. ATP is bound by residues Thr-14, Thr-15, and Ser-16. A sn-glycerol 3-phosphate-binding site is contributed by Thr-14. Arg-18 contributes to the ADP binding site. The sn-glycerol 3-phosphate site is built by Arg-84, Glu-85, Tyr-136, and Asp-246. Arg-84, Glu-85, Tyr-136, Asp-246, and Gln-247 together coordinate glycerol. ADP-binding residues include Thr-268 and Gly-311. ATP-binding residues include Thr-268, Gly-311, Gln-315, and Gly-412. Residues Gly-412 and Asn-416 each coordinate ADP.

This sequence belongs to the FGGY kinase family. Homotetramer and homodimer (in equilibrium). Heterodimer with EIIA-Glc. Binds 1 zinc ion per glycerol kinase EIIA-Glc dimer. The zinc ion is important for dimerization.

The catalysed reaction is glycerol + ATP = sn-glycerol 3-phosphate + ADP + H(+). It participates in polyol metabolism; glycerol degradation via glycerol kinase pathway; sn-glycerol 3-phosphate from glycerol: step 1/1. Activity of this regulatory enzyme is affected by several metabolites. Allosterically and non-competitively inhibited by fructose 1,6-bisphosphate (FBP) and unphosphorylated phosphocarrier protein EIIA-Glc (III-Glc), an integral component of the bacterial phosphotransferase (PTS) system. Key enzyme in the regulation of glycerol uptake and metabolism. Catalyzes the phosphorylation of glycerol to yield sn-glycerol 3-phosphate. The sequence is that of Glycerol kinase from Salmonella arizonae (strain ATCC BAA-731 / CDC346-86 / RSK2980).